The sequence spans 202 residues: FMN-dependent NADH:quinone oxidoreductase 2 (202 aa).

Residues S9, 15–17, and 95–98 each bind FMN; these read SAS and MWNL.

Belongs to the azoreductase type 1 family. As to quaternary structure, homodimer. It depends on FMN as a cofactor.

The enzyme catalyses 2 a quinone + NADH + H(+) = 2 a 1,4-benzosemiquinone + NAD(+). The catalysed reaction is N,N-dimethyl-1,4-phenylenediamine + anthranilate + 2 NAD(+) = 2-(4-dimethylaminophenyl)diazenylbenzoate + 2 NADH + 2 H(+). Quinone reductase that provides resistance to thiol-specific stress caused by electrophilic quinones. Functionally, also exhibits azoreductase activity. Catalyzes the reductive cleavage of the azo bond in aromatic azo compounds to the corresponding amines. The polypeptide is FMN-dependent NADH:quinone oxidoreductase 2 (Hahella chejuensis (strain KCTC 2396)).